The sequence spans 422 residues: Glutamyl-tRNA reductase (422 aa).

Substrate-binding positions include 48–51, Ser100, 105–107, and Gln111; these read TCNR and EDQ. Residue Cys49 is the Nucleophile of the active site. 180–185 is a binding site for NADP(+); the sequence is GTGEMG.

This sequence belongs to the glutamyl-tRNA reductase family. Homodimer.

It catalyses the reaction (S)-4-amino-5-oxopentanoate + tRNA(Glu) + NADP(+) = L-glutamyl-tRNA(Glu) + NADPH + H(+). Its pathway is porphyrin-containing compound metabolism; protoporphyrin-IX biosynthesis; 5-aminolevulinate from L-glutamyl-tRNA(Glu): step 1/2. Functionally, catalyzes the NADPH-dependent reduction of glutamyl-tRNA(Glu) to glutamate 1-semialdehyde (GSA). The polypeptide is Glutamyl-tRNA reductase (Methanococcoides burtonii (strain DSM 6242 / NBRC 107633 / OCM 468 / ACE-M)).